Here is a 285-residue protein sequence, read N- to C-terminus: ATP synthase gamma chain (285 aa).

It belongs to the ATPase gamma chain family. As to quaternary structure, F-type ATPases have 2 components, CF(1) - the catalytic core - and CF(0) - the membrane proton channel. CF(1) has five subunits: alpha(3), beta(3), gamma(1), delta(1), epsilon(1). CF(0) has three main subunits: a, b and c.

The protein localises to the cell membrane. Produces ATP from ADP in the presence of a proton gradient across the membrane. The gamma chain is believed to be important in regulating ATPase activity and the flow of protons through the CF(0) complex. The chain is ATP synthase gamma chain from Halalkalibacterium halodurans (strain ATCC BAA-125 / DSM 18197 / FERM 7344 / JCM 9153 / C-125) (Bacillus halodurans).